The primary structure comprises 491 residues: Angiopoietin-related protein 1 (491 aa).

The first 23 residues, methionine 1–glycine 23, serve as a signal peptide directing secretion. Residues isoleucine 80 to methionine 168 are a coiled coil. Asparagine 160 and asparagine 188 each carry an N-linked (GlcNAc...) asparagine glycan. Residues phenylalanine 271–aspartate 491 enclose the Fibrinogen C-terminal domain. 2 cysteine pairs are disulfide-bonded: cysteine 280/cysteine 309 and cysteine 432/cysteine 445.

It localises to the secreted. The chain is Angiopoietin-related protein 1 (ANGPTL1) from Bos taurus (Bovine).